The following is a 245-amino-acid chain: tRNA (guanine-N(7)-)-methyltransferase (245 aa).

Glu-75, Glu-100, Asp-127, and Asp-150 together coordinate S-adenosyl-L-methionine. Asp-150 is a catalytic residue. Substrate is bound by residues Lys-154, Asp-186, and 223 to 226 (TKFE).

The protein belongs to the class I-like SAM-binding methyltransferase superfamily. TrmB family.

It carries out the reaction guanosine(46) in tRNA + S-adenosyl-L-methionine = N(7)-methylguanosine(46) in tRNA + S-adenosyl-L-homocysteine. It participates in tRNA modification; N(7)-methylguanine-tRNA biosynthesis. Functionally, catalyzes the formation of N(7)-methylguanine at position 46 (m7G46) in tRNA. This is tRNA (guanine-N(7)-)-methyltransferase from Photobacterium profundum (strain SS9).